A 353-amino-acid polypeptide reads, in one-letter code: Alanine racemase (353 aa).

Residue Lys-33 is the Proton acceptor; specific for D-alanine of the active site. Lys-33 is subject to N6-(pyridoxal phosphate)lysine. Arg-129 provides a ligand contact to substrate. Residue Tyr-250 is the Proton acceptor; specific for L-alanine of the active site. Residue Met-298 participates in substrate binding.

Belongs to the alanine racemase family. The cofactor is pyridoxal 5'-phosphate.

The catalysed reaction is L-alanine = D-alanine. Its pathway is amino-acid biosynthesis; D-alanine biosynthesis; D-alanine from L-alanine: step 1/1. Its function is as follows. Catalyzes the interconversion of L-alanine and D-alanine. May also act on other amino acids. The polypeptide is Alanine racemase (alr) (Azoarcus sp. (strain BH72)).